Consider the following 461-residue polypeptide: Hydroxyproline dehydrogenase (461 aa).

Position 310 is an N6-acetyllysine (lysine 310).

The protein belongs to the proline oxidase family. The cofactor is FAD.

The catalysed reaction is trans-4-hydroxy-L-proline + a quinone = (3R,5S)-1-pyrroline-3-hydroxy-5-carboxylate + a quinol + H(+). The enzyme catalyses L-proline + a quinone = (S)-1-pyrroline-5-carboxylate + a quinol + H(+). It participates in amino-acid degradation; L-proline degradation into L-glutamate; L-glutamate from L-proline: step 1/2. Dehydrogenase that converts trans-4-L-hydroxyproline to delta-1-pyrroline-3-hydroxy-5-carboxylate (Hyp) using ubiquinone-10 as the terminal electron acceptor. Can also use proline as a substrate but with a very much lower efficiency. Does not react with other diastereomers of Hyp: trans-4-D-hydroxyproline and cis-4-L-hydroxyproline. Ubiquininone analogs such as menadione, duroquinone and ubiquinone-1 react more efficiently than oxygen as the terminal electron acceptor during catalysis. The sequence is that of Hydroxyproline dehydrogenase from Bos taurus (Bovine).